The chain runs to 245 residues: Probable phosphatase KPK_3500 (245 aa).

Residues histidine 7, histidine 9, histidine 15, histidine 40, glutamate 73, histidine 101, histidine 131, aspartate 192, and histidine 194 each contribute to the Zn(2+) site.

Belongs to the PHP family. As to quaternary structure, homotrimer. The cofactor is Zn(2+).

This chain is Probable phosphatase KPK_3500, found in Klebsiella pneumoniae (strain 342).